A 319-amino-acid polypeptide reads, in one-letter code: R-phycoerythrin gamma chain, chloroplastic (319 aa).

The transit peptide at M1 to R71 directs the protein to the chloroplast. C96 and C135 together coordinate phycourobilin. C212 serves as a coordination point for (2R,3E)-phycoerythrobilin. C299 lines the phycourobilin pocket.

As to quaternary structure, heteromer of 4 alpha, 4 beta and one gamma chains. In terms of processing, contains four covalently linked bilin chromophores.

The protein localises to the plastid. The protein resides in the chloroplast thylakoid membrane. This chain is R-phycoerythrin gamma chain, chloroplastic, found in Corallina officinalis (Coral seaweed).